The sequence spans 286 residues: ATP-binding protein ChvD (286 aa).

The ABC transporter domain maps to 21 to 85; the sequence is KLQDMIDSQN…DLLLLDEPTN (65 aa).

It belongs to the ABC transporter superfamily.

In terms of biological role, the induction of virG by growth under acidic conditions and by phosphate starvation, in the absence of plant inducers, is influenced by ChvD. In Rhizobium radiobacter (Agrobacterium tumefaciens), this protein is ATP-binding protein ChvD (chvD).